A 90-amino-acid polypeptide reads, in one-letter code: Putative regulatory protein Dred_1699 (90 aa).

Belongs to the RemA family.

In Desulforamulus reducens (strain ATCC BAA-1160 / DSM 100696 / MI-1) (Desulfotomaculum reducens), this protein is Putative regulatory protein Dred_1699.